We begin with the raw amino-acid sequence, 144 residues long: Mannitol-specific phosphotransferase enzyme IIA component (144 aa).

Residues 3–142 form the PTS EIIA type-2 domain; the sequence is ELFSNDNIFL…EEIKQVFEEA (140 aa). The active-site Tele-phosphohistidine intermediate is His63. At His63 the chain carries Phosphohistidine; by HPr.

As to quaternary structure, homodimer or homotrimer. Seems to be a monomer when not phosphorylated.

It is found in the cytoplasm. In terms of biological role, the phosphoenolpyruvate-dependent sugar phosphotransferase system (sugar PTS), a major carbohydrate active transport system, catalyzes the phosphorylation of incoming sugar substrates concomitantly with their translocation across the cell membrane. The enzyme II CmtAB PTS system is involved in D-mannitol transport. This is Mannitol-specific phosphotransferase enzyme IIA component (mtlF) from Staphylococcus aureus (strain MRSA252).